Here is an 859-residue protein sequence, read N- to C-terminus: Photoactivated adenylate cyclase subunit beta-like protein ST- (859 aa).

The BLUF 1 domain maps to 56 to 149; it reads LRRLMYLSKS…GRMYGDWHMK (94 aa). The disordered stretch occupies residues 420–444; that stretch reads RPPIFDDTPKSNPRPRTPGYGGRQR. One can recognise a BLUF 2 domain in the interval 471–563; that stretch reads LTTLTYISQA…RVYTSEWTLT (93 aa). The interval 814-859 is disordered; it reads ARSGEQPLTEPEQAKPDFRVSPGRDRHGVSGRRSNSSQGKGSIQVG. Positions 825 to 841 are enriched in basic and acidic residues; sequence EQAKPDFRVSPGRDRHG. The span at 845–859 shows a compositional bias: polar residues; sequence RRSNSSQGKGSIQVG.

Heterotetramer of two alpha and two beta subunits.

It localises to the cell projection. Its subcellular location is the cilium. It is found in the flagellum. This Euglena gracilis protein is Photoactivated adenylate cyclase subunit beta-like protein ST-.